The sequence spans 209 residues: Ribosomal RNA large subunit methyltransferase E (209 aa).

S-adenosyl-L-methionine is bound by residues Gly-63, Trp-65, Asp-83, Asp-99, and Asp-124. Lys-164 serves as the catalytic Proton acceptor. The 19-residue stretch at 191–209 folds into the TRAM domain; it reads EASRGRSREVYIVATGYKG.

Belongs to the class I-like SAM-binding methyltransferase superfamily. RNA methyltransferase RlmE family.

The protein localises to the cytoplasm. The enzyme catalyses uridine(2552) in 23S rRNA + S-adenosyl-L-methionine = 2'-O-methyluridine(2552) in 23S rRNA + S-adenosyl-L-homocysteine + H(+). Specifically methylates the uridine in position 2552 of 23S rRNA at the 2'-O position of the ribose in the fully assembled 50S ribosomal subunit. The chain is Ribosomal RNA large subunit methyltransferase E from Haemophilus influenzae (strain ATCC 51907 / DSM 11121 / KW20 / Rd).